Consider the following 506-residue polypeptide: Cytochrome P450 71B8 (506 aa).

The helical transmembrane segment at 5-25 threads the bilayer; sequence ILLCFFFLFPLLLTLFKKLLP. Position 443 (cysteine 443) interacts with heme.

It belongs to the cytochrome P450 family. The cofactor is heme.

The protein localises to the membrane. The sequence is that of Cytochrome P450 71B8 (CYP71B8) from Arabidopsis thaliana (Mouse-ear cress).